The chain runs to 377 residues: 23S rRNA (uracil(747)-C(5))-methyltransferase RlmC (377 aa).

4 residues coordinate [4Fe-4S] cluster: C3, C11, C14, and C87. The S-adenosyl-L-methionine site is built by Q212, F241, E262, and N307. C334 (nucleophile) is an active-site residue.

The protein belongs to the class I-like SAM-binding methyltransferase superfamily. RNA M5U methyltransferase family. RlmC subfamily.

The enzyme catalyses uridine(747) in 23S rRNA + S-adenosyl-L-methionine = 5-methyluridine(747) in 23S rRNA + S-adenosyl-L-homocysteine + H(+). Catalyzes the formation of 5-methyl-uridine at position 747 (m5U747) in 23S rRNA. The chain is 23S rRNA (uracil(747)-C(5))-methyltransferase RlmC from Edwardsiella ictaluri (strain 93-146).